The sequence spans 299 residues: ATP phosphoribosyltransferase (299 aa).

It belongs to the ATP phosphoribosyltransferase family. Long subfamily. Mg(2+) serves as cofactor.

The protein resides in the cytoplasm. The enzyme catalyses 1-(5-phospho-beta-D-ribosyl)-ATP + diphosphate = 5-phospho-alpha-D-ribose 1-diphosphate + ATP. It participates in amino-acid biosynthesis; L-histidine biosynthesis; L-histidine from 5-phospho-alpha-D-ribose 1-diphosphate: step 1/9. Feedback inhibited by histidine. Its function is as follows. Catalyzes the condensation of ATP and 5-phosphoribose 1-diphosphate to form N'-(5'-phosphoribosyl)-ATP (PR-ATP). Has a crucial role in the pathway because the rate of histidine biosynthesis seems to be controlled primarily by regulation of HisG enzymatic activity. The sequence is that of ATP phosphoribosyltransferase from Rhodopirellula baltica (strain DSM 10527 / NCIMB 13988 / SH1).